Consider the following 153-residue polypeptide: Lipoprotein signal peptidase (153 aa).

3 helical membrane-spanning segments follow: residues 11–31, 39–59, and 68–88; these read ILILTIAGIFIIDQNIKSLFV, DCIDLILVYNKGVAFSMFAFL, and LVLVFGVFGYMLYLNQLCYAI. Catalysis depends on residues aspartate 112 and aspartate 129. A helical membrane pass occupies residues 122-142; it reads FAVFNFADVMIDVAVVWILLL.

It belongs to the peptidase A8 family.

The protein resides in the cell inner membrane. The enzyme catalyses Release of signal peptides from bacterial membrane prolipoproteins. Hydrolyzes -Xaa-Yaa-Zaa-|-(S,diacylglyceryl)Cys-, in which Xaa is hydrophobic (preferably Leu), and Yaa (Ala or Ser) and Zaa (Gly or Ala) have small, neutral side chains.. It participates in protein modification; lipoprotein biosynthesis (signal peptide cleavage). Functionally, this protein specifically catalyzes the removal of signal peptides from prolipoproteins. This is Lipoprotein signal peptidase from Sulfurimonas denitrificans (strain ATCC 33889 / DSM 1251) (Thiomicrospira denitrificans (strain ATCC 33889 / DSM 1251)).